We begin with the raw amino-acid sequence, 360 residues long: Alpha-methylacyl-CoA racemase (360 aa).

Residues R38, 59–62 (ADLK), 83–85 (GYR), R91, and 125–130 (GHDINY) each bind substrate. Catalysis depends on H126, which acts as the Proton acceptor. Residue D156 is the Proton donor of the active site.

It belongs to the CoA-transferase III family. As to quaternary structure, homodimer.

It catalyses the reaction a (2S)-2-methylacyl-CoA = a (2R)-2-methylacyl-CoA. It carries out the reaction (2S)-2-methyltetradecanoyl-CoA = (2R)-2-methyltetradecanoyl-CoA. The catalysed reaction is (2R)-pristanoyl-CoA = (2S)-pristanoyl-CoA. The enzyme catalyses (25S)-3-oxocholest-4-en-26-oyl-CoA = (25R)-3-oxocholest-4-en-26-oyl-CoA. It catalyses the reaction (2S)-ibuprofenoyl-CoA = (2R)-ibuprofenoyl-CoA. Inactivated by N,N-dialkylcarbamoyl-CoA substrate-product analogs. Functionally, catalyzes the epimerization of (2R)- and (2S)-methylacyl-coenzyme A (CoA) thioesters. Accepts as substrates a wide range of alpha-methylacyl-CoAs, including (2R)-2-methylmyristoyl-CoA and (2S)-2-methylmyristoyl-CoA, (2R)-pristanoyl-CoA and (2S)-pristanoyl-CoA, and the cholesterol esters (25R)-3-oxo-cholest-4-en-26-oyl-CoA and (25S)-3-oxo-cholest-4-en-26-oyl-CoA. Can also catalyze the interconversion of the non-physiologic substrates (2R)-ibuprofenoyl-CoA and (2S)-ibuprofenoyl-CoA, which are potential competitive inhibitors of the enzyme. The polypeptide is Alpha-methylacyl-CoA racemase (Mycobacterium tuberculosis (strain ATCC 25618 / H37Rv)).